Here is a 65-residue protein sequence, read N- to C-terminus: Large ribosomal subunit protein bL33c (65 aa).

This sequence belongs to the bacterial ribosomal protein bL33 family.

The protein resides in the plastid. It is found in the chloroplast. The sequence is that of Large ribosomal subunit protein bL33c (rpl33) from Porphyra purpurea (Red seaweed).